We begin with the raw amino-acid sequence, 426 residues long: tRNA(Met) cytidine acetate ligase (426 aa).

ATP-binding positions include 7 to 20 (VVEY…HLFH), G101, N168, and R193.

It belongs to the TmcAL family.

Its subcellular location is the cytoplasm. It carries out the reaction cytidine(34) in elongator tRNA(Met) + acetate + ATP = N(4)-acetylcytidine(34) in elongator tRNA(Met) + AMP + diphosphate. Its function is as follows. Catalyzes the formation of N(4)-acetylcytidine (ac(4)C) at the wobble position of elongator tRNA(Met), using acetate and ATP as substrates. First activates an acetate ion to form acetyladenylate (Ac-AMP) and then transfers the acetyl group to tRNA to form ac(4)C34. In Kosmotoga olearia (strain ATCC BAA-1733 / DSM 21960 / TBF 19.5.1), this protein is tRNA(Met) cytidine acetate ligase.